We begin with the raw amino-acid sequence, 218 residues long: Thiopurine S-methyltransferase (218 aa).

Positions 10, 45, 66, and 123 each coordinate S-adenosyl-L-methionine.

This sequence belongs to the class I-like SAM-binding methyltransferase superfamily. TPMT family.

The protein resides in the cytoplasm. It carries out the reaction S-adenosyl-L-methionine + a thiopurine = S-adenosyl-L-homocysteine + a thiopurine S-methylether.. This Shewanella baltica (strain OS195) protein is Thiopurine S-methyltransferase.